The following is a 487-amino-acid chain: Putative sugar kinase YoaC (487 aa).

The protein belongs to the FGGY kinase family.

This Bacillus subtilis (strain 168) protein is Putative sugar kinase YoaC (yoaC).